Consider the following 129-residue polypeptide: Small ribosomal subunit protein uS11 (129 aa).

Belongs to the universal ribosomal protein uS11 family. In terms of assembly, part of the 30S ribosomal subunit. Interacts with proteins S7 and S18. Binds to IF-3.

In terms of biological role, located on the platform of the 30S subunit, it bridges several disparate RNA helices of the 16S rRNA. Forms part of the Shine-Dalgarno cleft in the 70S ribosome. The polypeptide is Small ribosomal subunit protein uS11 (Caulobacter vibrioides (strain ATCC 19089 / CIP 103742 / CB 15) (Caulobacter crescentus)).